The primary structure comprises 356 residues: UDP-N-acetylglucosamine--N-acetylmuramyl-(pentapeptide) pyrophosphoryl-undecaprenol N-acetylglucosamine transferase (356 aa).

2 residues coordinate UDP-N-acetyl-alpha-D-glucosamine: S198 and Q289.

This sequence belongs to the glycosyltransferase 28 family. MurG subfamily.

The protein resides in the cell membrane. The catalysed reaction is Mur2Ac(oyl-L-Ala-gamma-D-Glu-L-Lys-D-Ala-D-Ala)-di-trans,octa-cis-undecaprenyl diphosphate + UDP-N-acetyl-alpha-D-glucosamine = beta-D-GlcNAc-(1-&gt;4)-Mur2Ac(oyl-L-Ala-gamma-D-Glu-L-Lys-D-Ala-D-Ala)-di-trans,octa-cis-undecaprenyl diphosphate + UDP + H(+). The protein operates within cell wall biogenesis; peptidoglycan biosynthesis. In terms of biological role, cell wall formation. Catalyzes the transfer of a GlcNAc subunit on undecaprenyl-pyrophosphoryl-MurNAc-pentapeptide (lipid intermediate I) to form undecaprenyl-pyrophosphoryl-MurNAc-(pentapeptide)GlcNAc (lipid intermediate II). This chain is UDP-N-acetylglucosamine--N-acetylmuramyl-(pentapeptide) pyrophosphoryl-undecaprenol N-acetylglucosamine transferase, found in Streptococcus thermophilus (strain CNRZ 1066).